A 578-amino-acid polypeptide reads, in one-letter code: Protein RIK (578 aa).

Residues 1–34 form a disordered region; sequence MTEDNDEARVPLSDSSTTNDASRTRQRRKRKWDK. One can recognise a KH domain in the interval 206-273; it reads SSNVAARIRG…KSIDDAKRLA (68 aa). Positions 413–425 are enriched in polar residues; sequence ATSLSIPSDNASN. The disordered stretch occupies residues 413–578; that stretch reads ATSLSIPSDN…DPDEPLTTRS (166 aa). Pro residues predominate over residues 472–492; that stretch reads PPSPRSVMPPPPPKTIAPPPS. 2 stretches are compositionally biased toward low complexity: residues 493–503 and 510–521; these read KTMSPPSSKSM and SKTMSPLSSKSM. Over residues 560-572 the composition is skewed to acidic residues; the sequence is YGDDEDDDDDPDE.

As to quaternary structure, interacts with AS1. As to expression, expressed in vegetative tissues.

It is found in the nucleus. In Arabidopsis thaliana (Mouse-ear cress), this protein is Protein RIK (RIK).